Reading from the N-terminus, the 58-residue chain is Small ribosomal subunit protein bS21 (58 aa).

The disordered stretch occupies residues 39-58 (DKPSVKKRAKSKAAAKYRSR). A compositionally biased stretch (basic residues) spans 43–58 (VKKRAKSKAAAKYRSR).

Belongs to the bacterial ribosomal protein bS21 family.

In Chlamydia pneumoniae (Chlamydophila pneumoniae), this protein is Small ribosomal subunit protein bS21 (rpsU).